The following is a 626-amino-acid chain: Chaperone protein HtpG (626 aa).

The segment at 1–343 (MHKQTLSFQA…SADLPLNVSR (343 aa)) is a; substrate-binding. Positions 344–558 (ELLQESRAVK…DGDMSTQLAR (215 aa)) are b. Positions 559–626 (MLKQAGQAVP…YVKRVNALLV (68 aa)) are c.

It belongs to the heat shock protein 90 family. Homodimer.

The protein localises to the cytoplasm. Functionally, molecular chaperone. Has ATPase activity. The sequence is that of Chaperone protein HtpG from Polaromonas sp. (strain JS666 / ATCC BAA-500).